Here is a 71-residue protein sequence, read N- to C-terminus: Large ribosomal subunit protein eL38 (71 aa).

It belongs to the eukaryotic ribosomal protein eL38 family.

In Ixodes scapularis (Black-legged tick), this protein is Large ribosomal subunit protein eL38 (RpL38).